An 894-amino-acid chain; its full sequence is Probable cytoplasmic aconitate hydratase (894 aa).

Substrate is bound by residues Gln-87 and 207–209 (DSH). Residues Cys-438, Cys-504, and Cys-507 each coordinate [4Fe-4S] cluster. Residues Arg-537, Arg-542, and 781–782 (SR) contribute to the substrate site.

It belongs to the aconitase/IPM isomerase family. [4Fe-4S] cluster serves as cofactor.

It localises to the cytoplasm. The protein localises to the cytosol. It catalyses the reaction citrate = D-threo-isocitrate. Catalyzes the isomerization of citrate to isocitrate via cis-aconitate. This Dictyostelium discoideum (Social amoeba) protein is Probable cytoplasmic aconitate hydratase (aco1).